The primary structure comprises 33 residues: Tail virion protein G9P (33 aa).

A helical transmembrane segment spans residues 5–25 (VGSFLGAYFLGFALFYGIGFF).

This sequence belongs to the inovirus G9P protein family.

It localises to the virion. The protein localises to the host membrane. May initiate with G7P the virion concomitant assembly-budding process, by interacting with the packaging signal of the viral genome. The assembly-budding takes place at the host inner membrane. In turn, G7P and G9P are present at the end of the filamentous virion that emerges first from the bacterial host. The protein is Tail virion protein G9P (IX) of Salmonella phage IKe (Bacteriophage IKe).